We begin with the raw amino-acid sequence, 281 residues long: Tetraspanin-5 (281 aa).

Over 1 to 7 (MNRMSNT) the chain is Cytoplasmic. Residues 8–28 (VIGFLNILTLISSIVLLGSAL) form a helical membrane-spanning segment. The Extracellular segment spans residues 29-44 (WMGRSKTTCEHFLQKP). Residues 45-65 (LLILGLAILILSVAGLVGACC) traverse the membrane as a helical segment. Topologically, residues 66–74 (DVAWVLWVY) are cytoplasmic. A helical transmembrane segment spans residues 75–95 (LFFMVFIIVALMGLTLFGFIV). Residues 96 to 221 (TSHSGGVVVD…TVRRDWHKLS (126 aa)) are Extracellular-facing. The helical transmembrane segment at 222–242 (LVNVIVVIFLIAVYCVGCCAF) threads the bilayer. Over 243-281 (KNAKRPQHYGFPYGRYGMSKSRPGWEQSWSRWWHGRDRY) the chain is Cytoplasmic.

This sequence belongs to the tetraspanin (TM4SF) family.

Its subcellular location is the membrane. In terms of biological role, may be involved in the regulation of cell differentiation. The chain is Tetraspanin-5 (TET5) from Arabidopsis thaliana (Mouse-ear cress).